We begin with the raw amino-acid sequence, 374 residues long: MHKTRLALSCLLGSLLLSGAVHAAEALVPPKGYYAPVDIRKGEAPACPVVPEPFTGELVFRSKYEGSDAARSTLNEEAEKAFRTKTAPITQIERGVSRMVMRYMEKGRAGDLECTLAWLDAWAEDGALLTTEYNHTGKSMRKWALGSLAGAYLRLKFSSSQPLAAYPEQARRIESWFAKVGDQVIKDWSDLPLKRINNHSYWAAWAVMAAGVATNRRPLFDWAVEQFHIAAGQVDSNGFLPNELKRRQRALAYHNYSLPPLMMVAAFALANGVDLRGDNDGALGRLAGNVLAGVEKPEPFAERAGDEDQDMEDLETDAKFSWLEPYCALYSCSPALRERKAEMGPFKNFRLGGDVTRIFDPAEKSPRSTVGKRD.

Residues 1–23 (MHKTRLALSCLLGSLLLSGAVHA) form the signal peptide. Residues 62–63 (SK), 135–136 (HT), and Y253 contribute to the substrate site.

This sequence belongs to the polysaccharide lyase 5 family.

It localises to the periplasm. The catalysed reaction is Eliminative cleavage of alginate to give oligosaccharides with 4-deoxy-alpha-L-erythro-hex-4-enuronosyl groups at their non-reducing ends and beta-D-mannuronate at their reducing end.. Functionally, catalyzes the depolymerization of alginate by cleaving the beta-1,4 glycosidic bond between two adjacent sugar residues via a beta-elimination mechanism. May serve to degrade mislocalized alginate that is trapped in the periplasmic space. This is Alginate lyase from Azotobacter vinelandii (strain DJ / ATCC BAA-1303).